The primary structure comprises 85 residues: uncharacterized protein (85 aa).

Positions 17–53 form a coiled coil; sequence KKRYEMLVQELLKEDDEEREKILAEELELLLDFLKKA.

This is an uncharacterized protein from Archaeoglobus fulgidus (strain ATCC 49558 / DSM 4304 / JCM 9628 / NBRC 100126 / VC-16).